The sequence spans 123 residues: Large ribosomal subunit protein uL14 (123 aa).

This sequence belongs to the universal ribosomal protein uL14 family. As to quaternary structure, part of the 50S ribosomal subunit. Forms a cluster with proteins L3 and L19. In the 70S ribosome, L14 and L19 interact and together make contacts with the 16S rRNA in bridges B5 and B8.

Its function is as follows. Binds to 23S rRNA. Forms part of two intersubunit bridges in the 70S ribosome. This is Large ribosomal subunit protein uL14 from Enterobacter sp. (strain 638).